The chain runs to 388 residues: Chaperone protein DnaJ (388 aa).

The region spanning Asp5–Gly70 is the J domain. A CR-type zinc finger spans residues Gly135 to Ser213. The Zn(2+) site is built by Cys148, Cys151, Cys165, Cys168, Cys187, Cys190, Cys201, and Cys204. CXXCXGXG motif repeat units lie at residues Cys148–Gly155, Cys165–Gly172, Cys187–Gly194, and Cys201–Gly208.

Belongs to the DnaJ family. As to quaternary structure, homodimer. It depends on Zn(2+) as a cofactor.

The protein localises to the cytoplasm. Its function is as follows. Participates actively in the response to hyperosmotic and heat shock by preventing the aggregation of stress-denatured proteins and by disaggregating proteins, also in an autonomous, DnaK-independent fashion. Unfolded proteins bind initially to DnaJ; upon interaction with the DnaJ-bound protein, DnaK hydrolyzes its bound ATP, resulting in the formation of a stable complex. GrpE releases ADP from DnaK; ATP binding to DnaK triggers the release of the substrate protein, thus completing the reaction cycle. Several rounds of ATP-dependent interactions between DnaJ, DnaK and GrpE are required for fully efficient folding. Also involved, together with DnaK and GrpE, in the DNA replication of plasmids through activation of initiation proteins. This is Chaperone protein DnaJ from Buchnera aphidicola subsp. Cinara cedri (strain Cc).